Here is a 1022-residue protein sequence, read N- to C-terminus: Probable beta-galactosidase B (1022 aa).

Positions 1–20 (MARFPQLLFLLLASIGLLSA) are cleaved as a signal peptide. N-linked (GlcNAc...) asparagine glycosylation is present at Asn23. Tyr90 serves as a coordination point for substrate. N-linked (GlcNAc...) asparagine glycosylation occurs at Asn100. Substrate-binding residues include Asn135, Ala136, Glu137, and Asn195. The active-site Proton donor is the Glu196. N-linked (GlcNAc...) asparagine glycosylation occurs at Asn211. Substrate is bound at residue Tyr265. A disulfide bridge connects residues Cys271 and Cys324. Catalysis depends on Glu308, which acts as the Nucleophile. Tyr373 serves as a coordination point for substrate. Residues Asn411, Asn456, Asn541, Asn554, Asn626, Asn777, Asn790, Asn832, Asn880, and Asn881 are each glycosylated (N-linked (GlcNAc...) asparagine).

It belongs to the glycosyl hydrolase 35 family.

The protein localises to the secreted. It catalyses the reaction Hydrolysis of terminal non-reducing beta-D-galactose residues in beta-D-galactosides.. Cleaves beta-linked terminal galactosyl residues from gangliosides, glycoproteins, and glycosaminoglycans. This chain is Probable beta-galactosidase B (lacB), found in Aspergillus terreus (strain NIH 2624 / FGSC A1156).